The chain runs to 310 residues: Olfactory receptor 2A4 (310 aa).

Residues 1-24 (MGDNITSIREFLLLGFPVGPRIQM) are Extracellular-facing. A glycan (N-linked (GlcNAc...) asparagine) is linked at Asn4. A helical transmembrane segment spans residues 25 to 48 (LLFGLFSLFYVFTLLGNGTILGLI). At 49–56 (SLDSRLHA) the chain is on the cytoplasmic side. Residues 57 to 78 (PMYFFLSHLAVVDIAYACNTVP) form a helical membrane-spanning segment. Topologically, residues 79–99 (RMLVNLLHPAKPISFAGRMMQ) are extracellular. A helical membrane pass occupies residues 100–119 (TFLFSTFAVTECLLLVVMSY). Topologically, residues 120–138 (DLYVAICHPLRYLAIMTWR) are cytoplasmic. A helical transmembrane segment spans residues 139–157 (VCITLAVTSWTTGVLLSLI). The Extracellular segment spans residues 158–194 (HLVLLLPLPFCRPQKIYHFFCEILAVLKLACADTHIN). A helical transmembrane segment spans residues 195 to 218 (ENMVLAGAISGLVGPLSTIVVSYM). The Cytoplasmic portion of the chain corresponds to 219–235 (CILCAILQIQSREVQRK). A helical membrane pass occupies residues 236 to 258 (AFRTCFSHLCVIGLVYGTAIIMY). At 259–271 (VGPRYGNPKEQKK) the chain is on the extracellular side. A helical transmembrane segment spans residues 272 to 291 (YLLLFHSLFNPMLNPLICSL). The Cytoplasmic segment spans residues 292–310 (RNSEVKNTLKRVLGVERAL).

Belongs to the G-protein coupled receptor 1 family.

It localises to the cell membrane. Functionally, odorant receptor. The chain is Olfactory receptor 2A4 (OR2A4) from Homo sapiens (Human).